The sequence spans 163 residues: Lipoprotein signal peptidase (163 aa).

Transmembrane regions (helical) follow at residues 7-27, 64-84, and 99-119; these read LSFL…KYLV, WQKY…VYLL, and ALII…GFVV. Catalysis depends on residues D120 and D138. A helical membrane pass occupies residues 133–153; that stretch reads VFNVADIAICVGVGLLILDSF.

Belongs to the peptidase A8 family.

The protein resides in the cell inner membrane. The catalysed reaction is Release of signal peptides from bacterial membrane prolipoproteins. Hydrolyzes -Xaa-Yaa-Zaa-|-(S,diacylglyceryl)Cys-, in which Xaa is hydrophobic (preferably Leu), and Yaa (Ala or Ser) and Zaa (Gly or Ala) have small, neutral side chains.. Its pathway is protein modification; lipoprotein biosynthesis (signal peptide cleavage). Its function is as follows. This protein specifically catalyzes the removal of signal peptides from prolipoproteins. The sequence is that of Lipoprotein signal peptidase from Actinobacillus succinogenes (strain ATCC 55618 / DSM 22257 / CCUG 43843 / 130Z).